The primary structure comprises 42 residues: Potassium channel toxin gamma-KTx 1.4 (42 aa).

Intrachain disulfides connect Cys-5/Cys-23, Cys-11/Cys-34, Cys-20/Cys-39, and Cys-24/Cys-41.

Belongs to the ergtoxin family. Gamma-KTx 1 subfamily. Expressed by the venom gland.

The protein localises to the secreted. Its function is as follows. Blocks Kv11/ERG potassium channels. This is Potassium channel toxin gamma-KTx 1.4 from Centruroides sculpturatus (Arizona bark scorpion).